The sequence spans 275 residues: Prohibitin-1 (275 aa).

Residues Y106 to L109 carry the AIM motif.

The protein belongs to the prohibitin family. The mitochondrial prohibitin complex consists of two subunits (PHB1 and PHB2). The subunits assemble into a membrane-associated ring-shaped supercomplex of approximately 1 mDa. Interacts with ATG24/SNX4; the interaction is direct and plays a role in mitophagy.

It is found in the mitochondrion inner membrane. In terms of biological role, prohibitin probably acts as a holdase/unfoldase for the stabilization of newly synthesized mitochondrial proteins. Involved in mitophagy. Required for the switch to necrotrophic growth. This chain is Prohibitin-1, found in Colletotrichum higginsianum (strain IMI 349063) (Crucifer anthracnose fungus).